The following is a 255-amino-acid chain: NAD kinase (255 aa).

Residue Asp44 is the Proton acceptor of the active site. NAD(+)-binding positions include 44-45 (DG), His49, 114-115 (NE), Asp144, Ala152, 155-160 (SAYNLS), and Gln216.

It belongs to the NAD kinase family. A divalent metal cation is required as a cofactor.

Its subcellular location is the cytoplasm. The enzyme catalyses NAD(+) + ATP = ADP + NADP(+) + H(+). Its function is as follows. Involved in the regulation of the intracellular balance of NAD and NADP, and is a key enzyme in the biosynthesis of NADP. Catalyzes specifically the phosphorylation on 2'-hydroxyl of the adenosine moiety of NAD to yield NADP. The protein is NAD kinase of Rickettsia akari (strain Hartford).